Reading from the N-terminus, the 536-residue chain is MAERAGRRCCLGWDFSTQQVKVVAVDAELNVFYEDSVHFDRDLPEFGTQGGVHVHKDRLTVTSPVLMWVQALDLILEKMKASGFDFSQVLALSGAGQQHGSVYWKTGASLALSSLSPALLLHQQLQACFSVSDCPIWMDSSTTAQCHQLEAAVGGAQALSCLTGSRAYERFTGNQISKIFQKNPEAYSNSERISLVSSFAASLFLGRYSPIDYSDGSGMNLLQIQEKVWSQACLDACAPHLKEKLGSPVPSCSVVGAISSYYVQRYGFPPGCKVVAFTGDNPASLAGMRLEEGDVAVSLGTSDTLFLWLQKPMPALEGHIFCNPVDARQYMALLCFKNGSLMREKIRDESASCSWNKFSKALQSTEMGNNGNLGFYFDVMEITPEIIGCHRFNADNMEVSAFPGDVEIRALVEGQFMAKRIHAEGLGYRIMPKTKILATGGASHNKDILQVLADVFGAPVYVIDTTSSACVGSAYRAFHGLAGGTGVAFSEVVKSAPQPSLAATPNPGASQVYAALLPRYAELEQRILSKARGPLE.

H99, R170, D280, and N281 together coordinate substrate. Residues W355, 441–442 (GA), and N445 contribute to the ATP site.

This sequence belongs to the FGGY kinase family. As to quaternary structure, monomer.

It carries out the reaction D-xylulose + ATP = D-xylulose 5-phosphate + ADP + H(+). In terms of biological role, phosphorylates D-xylulose to produce D-xylulose 5-phosphate, a molecule that may play an important role in the regulation of glucose metabolism and lipogenesis. In Rattus norvegicus (Rat), this protein is Xylulose kinase (Xylb).